A 509-amino-acid chain; its full sequence is Steroid 17-alpha-hydroxylase/17,20 lyase (509 aa).

Asn202 serves as a coordination point for substrate. Cys442 lines the heme pocket.

The protein belongs to the cytochrome P450 family. Requires heme as cofactor.

It localises to the endoplasmic reticulum membrane. Its subcellular location is the microsome membrane. The enzyme catalyses a C21-steroid + reduced [NADPH--hemoprotein reductase] + O2 = a 17alpha-hydroxy-C21-steroid + oxidized [NADPH--hemoprotein reductase] + H2O + H(+). It catalyses the reaction progesterone + reduced [NADPH--hemoprotein reductase] + O2 = 17alpha-hydroxyprogesterone + oxidized [NADPH--hemoprotein reductase] + H2O + H(+). The catalysed reaction is pregnenolone + reduced [NADPH--hemoprotein reductase] + O2 = 17alpha-hydroxypregnenolone + oxidized [NADPH--hemoprotein reductase] + H2O + H(+). It carries out the reaction 17alpha-hydroxyprogesterone + reduced [NADPH--hemoprotein reductase] + O2 = androst-4-ene-3,17-dione + acetate + oxidized [NADPH--hemoprotein reductase] + H2O + 2 H(+). The enzyme catalyses 17alpha-hydroxyprogesterone + reduced [NADPH--hemoprotein reductase] + O2 = 16alpha,17alpha-dihydroxyprogesterone + oxidized [NADPH--hemoprotein reductase] + H2O + H(+). It catalyses the reaction 16alpha,17alpha-dihydroxyprogesterone + reduced [NADPH--hemoprotein reductase] + O2 = 6beta,16alpha,17alpha-trihydroxyprogesterone + oxidized [NADPH--hemoprotein reductase] + H2O + H(+). The catalysed reaction is 17alpha-hydroxypregnenolone + reduced [NADPH--hemoprotein reductase] + O2 = 3beta-hydroxyandrost-5-en-17-one + acetate + oxidized [NADPH--hemoprotein reductase] + H2O + 2 H(+). It carries out the reaction 16alpha,17alpha-dihydroxypregnenolone + reduced [NADPH--hemoprotein reductase] + O2 = 3beta,16alpha-dihydroxy-androst-5-en-17-one + acetate + oxidized [NADPH--hemoprotein reductase] + H2O + 2 H(+). The enzyme catalyses 3beta-hydroxyandrost-5-en-17-one + reduced [NADPH--hemoprotein reductase] + O2 = 3beta,16alpha-dihydroxy-androst-5-en-17-one + oxidized [NADPH--hemoprotein reductase] + H2O + H(+). It catalyses the reaction androst-4-ene-3,17-dione + reduced [NADPH--hemoprotein reductase] + O2 = 16alpha-hydroxyandrost-4-ene-3,17-dione + oxidized [NADPH--hemoprotein reductase] + H2O + H(+). It participates in steroid hormone biosynthesis. The protein operates within steroid biosynthesis; glucocorticoid biosynthesis. Regulated predominantly by intracellular cAMP levels. The 17,20-lyase activity is stimulated by cytochrome b5, which acts as an allosteric effector increasing the Vmax of the lyase activity. Functionally, a cytochrome P450 monooxygenase involved in corticoid and androgen biosynthesis. Catalyzes 17-alpha hydroxylation of C21 steroids, which is common for both pathways. A second oxidative step, required only for androgen synthesis, involves an acyl-carbon cleavage. The 17-alpha hydroxy intermediates, as part of adrenal glucocorticoids biosynthesis pathway, are precursors of cortisol. Hydroxylates steroid hormones, pregnenolone and progesterone to form 17-alpha hydroxy metabolites, followed by the cleavage of the C17-C20 bond to form C19 steroids, dehydroepiandrosterone (DHEA) and androstenedione. Has 16-alpha hydroxylase activity. Catalyzes 16-alpha hydroxylation of 17-alpha hydroxy pregnenolone, followed by the cleavage of the C17-C20 bond to form 16-alpha-hydroxy DHEA. Also 16-alpha hydroxylates androgens, relevant for estriol synthesis. Mechanistically, uses molecular oxygen inserting one oxygen atom into a substrate, and reducing the second into a water molecule, with two electrons provided by NADPH via cytochrome P450 reductase (CPR; NADPH-ferrihemoprotein reductase). This chain is Steroid 17-alpha-hydroxylase/17,20 lyase (CYP17A1), found in Bison bison (American bison).